Here is a 612-residue protein sequence, read N- to C-terminus: MDDEETAEIEDVNVLVPATGGEGPVDGASAMGAVQETENVNEESEAQREEDVVRDYMMELIRQSDEQLAADAPDAAASTGSDGSGDDDEQPNQNEEVGAGSGEQEDEAASHDSDMSLDSPGSEDDSVVWNPHPPGWMIPPNRLHSAVDMMVTQARNSDAGIAGLLSRHHFLQRIRSIVFSQERRRSRTSEEGEASSEPPHTPPPPRSPYDVEMEEGIRFDTNLAAEHSYFGNNSSRVPGVDYLEEGSTHHMLIFLHQHILFPGEVLPFMIDGSLIDEEMQQNGLDGLIFAVGFPLMQPPEDCPNRLYGVTCQIYEKGESGRQLVFYKSRALQRIVINCDDIQGLPQYIARNPTNKCYSKVKILPEYFLPEPLKCIDMGSMSRFRDIPSMRNMYQRYQITSTPWPLDACLEYSYTDIVEKARKKLEIHKIDTMPKCPIQLSFWLVRNLHLTEKLMRSTFLTDSVNTRLQIIGSTLKDESVFYCRYCNSSLAYCSDLFAMSKHGVQTQYCNSAGYIHETNTVYRVMTHAIGYSGEPTTEFSWFPGYQWHIILCKFCAQHVGWEFKAVQPNLTPKLFFGLAGSSVRIGKLVENTPVNGSTFVVRNLLRMVSSEME.

The span at 1-11 shows a compositional bias: acidic residues; it reads MDDEETAEIED. 3 disordered regions span residues 1–30, 58–133, and 181–211; these read MDDEETAEIEDVNVLVPATGGEGPVDGASA, MELI…NPHP, and QERRRSRTSEEGEASSEPPHTPPPPRSPYDV. A compositionally biased stretch (low complexity) spans 69 to 81; sequence AADAPDAAASTGS. Basic and acidic residues predominate over residues 181 to 190; the sequence is QERRRSRTSE. A Lon N-terminal domain is found at 250-478; sequence HMLIFLHQHI…IIGSTLKDES (229 aa). The CULT domain occupies 477–586; it reads ESVFYCRYCN…LAGSSVRIGK (110 aa). Cysteine 482, cysteine 485, cysteine 551, and cysteine 554 together coordinate Zn(2+).

It belongs to the CRBN family. In terms of assembly, likely a component of a DCX (DDB1-CUL4-X-box) protein ligase complex. May interact with pic/DDB1. Post-translationally, ubiquitinated.

It is found in the nucleus. The protein operates within protein modification; protein ubiquitination. Functionally, substrate recognition component of a DCX (DDB1-CUL4-X-box) E3 protein ligase complex that mediates the ubiquitination and subsequent proteasomal degradation of target proteins. Has an essential role in mediating growth by negatively regulating insulin signaling. It also has a role in maintaining presynaptic function in the neuromuscular junction synapses of third-instar larvae. The protein is Protein cereblon of Drosophila willistoni (Fruit fly).